We begin with the raw amino-acid sequence, 98 residues long: MIPTYMNIMLAFTISLLGMLTYRSHLMASLLCLEGMMMSLFIMTTLIALNTRSPLTNIMPIILLVFAACEAAVGLALLVSISNTYGLDYIHNLNLLQC.

Helical transmembrane passes span 1 to 21, 29 to 49, and 61 to 81; these read MIPTYMNIMLAFTISLLGMLT, SLLCLEGMMMSLFIMTTLIAL, and IILLVFAACEAAVGLALLVSI.

The protein belongs to the complex I subunit 4L family. In terms of assembly, core subunit of respiratory chain NADH dehydrogenase (Complex I) which is composed of 45 different subunits.

The protein resides in the mitochondrion inner membrane. The catalysed reaction is a ubiquinone + NADH + 5 H(+)(in) = a ubiquinol + NAD(+) + 4 H(+)(out). Core subunit of the mitochondrial membrane respiratory chain NADH dehydrogenase (Complex I) which catalyzes electron transfer from NADH through the respiratory chain, using ubiquinone as an electron acceptor. Part of the enzyme membrane arm which is embedded in the lipid bilayer and involved in proton translocation. The sequence is that of NADH-ubiquinone oxidoreductase chain 4L (MT-ND4L) from Macaca ochreata subsp. brunnescens (Muna-buton macaque).